The primary structure comprises 139 residues: Maximins 4/H3 type 6 (139 aa).

The signal sequence occupies residues 1-18; that stretch reads MNFKYIVAVSFLIASAYA. A propeptide spanning residues 19–43 is cleaved from the precursor; sequence RSVQNDEQSLSQRDVLEEESLREIR. N70 is subject to Asparagine amide. A propeptide spanning residues 74-118 is cleaved from the precursor; that stretch reads TAEDHEVMKRLEAVMRDLDSLDHPEEASERETRGFNQDEIAKEKR. Residue I138 is modified to Isoleucine amide.

Belongs to the bombinin family. In terms of tissue distribution, expressed by the skin glands.

The protein resides in the secreted. Its function is as follows. Maximin-4 shows antibacterial activity against both Gram-positive and Gram-negative bacteria. It also shows antimicrobial activity against the fungus C.albicans, but not against A.flavus nor P.uticale. It has little hemolytic activity. It does not possess a significant cytotoxicity against tumor cell lines. It does not possess a significant anti-HIV activity. Functionally, maximin-H3 shows antibacterial activity against both Gram-positive and Gram-negative bacteria. It also shows antimicrobial activity against the fungus C.albicans. Shows strong hemolytic activity. In Bombina maxima (Giant fire-bellied toad), this protein is Maximins 4/H3 type 6.